A 348-amino-acid chain; its full sequence is Caricain (348 aa).

A signal peptide spans 1-16 (MAMIPSISKLLFVAIC). A propeptide spans 17-132 (LFVHMSVSFG…EEFINEDTVN (116 aa)) (activation peptide). Asparagine 86 carries an N-linked (GlcNAc...) asparagine glycan. Intrachain disulfides connect cysteine 154–cysteine 195, cysteine 188–cysteine 227, and cysteine 285–cysteine 336. Cysteine 157 is an active-site residue. An E64-binding site is contributed by cysteine 157. Residues histidine 291 and asparagine 311 contribute to the active site.

The protein belongs to the peptidase C1 family. As to quaternary structure, monomer.

The enzyme catalyses Hydrolysis of proteins with broad specificity for peptide bonds, similar to those of papain and chymopapain.. Its activity is regulated as follows. Repressed by the active-site-directed cysteine protease inhibitor E64 (L-trans-epoxysuccinyl-leucylamide-(4-guanido)-butane) produced by Aspergillus japonicus. Functionally, cysteine proteinase with a high level of diversity in substrate specificity. The protein is Caricain of Carica papaya (Papaya).